A 289-amino-acid chain; its full sequence is 1D-myo-inositol 2-acetamido-2-deoxy-alpha-D-glucopyranoside deacetylase 1 (289 aa).

His4, Asp7, and His140 together coordinate Zn(2+).

Belongs to the MshB deacetylase family. Requires Zn(2+) as cofactor.

It catalyses the reaction 1D-myo-inositol 2-acetamido-2-deoxy-alpha-D-glucopyranoside + H2O = 1D-myo-inositol 2-amino-2-deoxy-alpha-D-glucopyranoside + acetate. Catalyzes the deacetylation of 1D-myo-inositol 2-acetamido-2-deoxy-alpha-D-glucopyranoside (GlcNAc-Ins) in the mycothiol biosynthesis pathway. This is 1D-myo-inositol 2-acetamido-2-deoxy-alpha-D-glucopyranoside deacetylase 1 from Frankia alni (strain DSM 45986 / CECT 9034 / ACN14a).